Reading from the N-terminus, the 200-residue chain is ATP-dependent Clp protease proteolytic subunit (200 aa).

Ser102 acts as the Nucleophile in catalysis. The active site involves His127.

Belongs to the peptidase S14 family. Fourteen ClpP subunits assemble into 2 heptameric rings which stack back to back to give a disk-like structure with a central cavity, resembling the structure of eukaryotic proteasomes.

It localises to the cytoplasm. The enzyme catalyses Hydrolysis of proteins to small peptides in the presence of ATP and magnesium. alpha-casein is the usual test substrate. In the absence of ATP, only oligopeptides shorter than five residues are hydrolyzed (such as succinyl-Leu-Tyr-|-NHMec, and Leu-Tyr-Leu-|-Tyr-Trp, in which cleavage of the -Tyr-|-Leu- and -Tyr-|-Trp bonds also occurs).. In terms of biological role, cleaves peptides in various proteins in a process that requires ATP hydrolysis. Has a chymotrypsin-like activity. Plays a major role in the degradation of misfolded proteins. The sequence is that of ATP-dependent Clp protease proteolytic subunit from Dehalococcoides mccartyi (strain ATCC BAA-2266 / KCTC 15142 / 195) (Dehalococcoides ethenogenes (strain 195)).